The chain runs to 365 residues: Cobalt-precorrin-5B C(1)-methyltransferase (365 aa).

This sequence belongs to the CbiD family.

It carries out the reaction Co-precorrin-5B + S-adenosyl-L-methionine = Co-precorrin-6A + S-adenosyl-L-homocysteine. The protein operates within cofactor biosynthesis; adenosylcobalamin biosynthesis; cob(II)yrinate a,c-diamide from sirohydrochlorin (anaerobic route): step 6/10. Catalyzes the methylation of C-1 in cobalt-precorrin-5B to form cobalt-precorrin-6A. In Geobacillus sp. (strain WCH70), this protein is Cobalt-precorrin-5B C(1)-methyltransferase.